The following is a 97-amino-acid chain: Gene 45 protein (97 aa).

This Mycobacterium (Mycobacteriophage L5) protein is Gene 45 protein (45).